The following is a 140-amino-acid chain: Putative pre-16S rRNA nuclease (140 aa).

Belongs to the YqgF nuclease family.

Its subcellular location is the cytoplasm. In terms of biological role, could be a nuclease involved in processing of the 5'-end of pre-16S rRNA. This Endomicrobium trichonymphae protein is Putative pre-16S rRNA nuclease.